Here is a 245-residue protein sequence, read N- to C-terminus: Phycocyanobilin:ferredoxin oxidoreductase (245 aa).

This sequence belongs to the HY2 family.

It carries out the reaction (2R,3Z)-phycocyanobilin + 4 oxidized [2Fe-2S]-[ferredoxin] = biliverdin IXalpha + 4 reduced [2Fe-2S]-[ferredoxin] + 4 H(+). Catalyzes the four-electron reduction of biliverdin IX-alpha (2-electron reduction at both the A and D rings); the reaction proceeds via an isolatable 2-electron intermediate, 181,182-dihydrobiliverdin. In Trichormus variabilis (strain ATCC 29413 / PCC 7937) (Anabaena variabilis), this protein is Phycocyanobilin:ferredoxin oxidoreductase.